A 135-amino-acid polypeptide reads, in one-letter code: ATP synthase epsilon chain (135 aa).

This sequence belongs to the ATPase epsilon chain family. As to quaternary structure, F-type ATPases have 2 components, CF(1) - the catalytic core - and CF(0) - the membrane proton channel. CF(1) has five subunits: alpha(3), beta(3), gamma(1), delta(1), epsilon(1). CF(0) has three main subunits: a, b and c.

It is found in the cell inner membrane. In terms of biological role, produces ATP from ADP in the presence of a proton gradient across the membrane. The chain is ATP synthase epsilon chain from Bradyrhizobium sp. (strain ORS 278).